A 473-amino-acid polypeptide reads, in one-letter code: Arginine biosynthesis bifunctional protein ArgJ, mitochondrial (473 aa).

Substrate is bound by residues Thr201, Lys230, Thr241, Glu328, Asn468, and Thr473. The active-site Nucleophile is Thr241.

Belongs to the ArgJ family. As to quaternary structure, heterodimer of an alpha and a beta chain. The alpha and beta chains are autoproteolytically processed from a single precursor protein within the mitochondrion.

It is found in the mitochondrion matrix. The catalysed reaction is N(2)-acetyl-L-ornithine + L-glutamate = N-acetyl-L-glutamate + L-ornithine. It catalyses the reaction L-glutamate + acetyl-CoA = N-acetyl-L-glutamate + CoA + H(+). It functions in the pathway amino-acid biosynthesis; L-arginine biosynthesis; L-ornithine and N-acetyl-L-glutamate from L-glutamate and N(2)-acetyl-L-ornithine (cyclic): step 1/1. Its pathway is amino-acid biosynthesis; L-arginine biosynthesis; N(2)-acetyl-L-ornithine from L-glutamate: step 1/4. Functionally, catalyzes two activities which are involved in the cyclic version of arginine biosynthesis: the synthesis of acetylglutamate from glutamate and acetyl-CoA, and of ornithine by transacetylation between acetylornithine and glutamate. In Ajellomyces capsulatus (strain G186AR / H82 / ATCC MYA-2454 / RMSCC 2432) (Darling's disease fungus), this protein is Arginine biosynthesis bifunctional protein ArgJ, mitochondrial.